The chain runs to 615 residues: Probable ATP-citrate synthase subunit 1 (615 aa).

Residues 221-241 (LIRF…EVGG) and 272-298 (FKTE…KNQA) contribute to the ATP site. Glutamate 238 contacts Mg(2+). Residue histidine 280 is the Tele-phosphohistidine intermediate of the active site. 299–309 (MREAGIYVPET) is a binding site for CoA. Phosphoserine is present on serine 359.

It belongs to the succinate/malate CoA ligase alpha subunit family. In terms of assembly, composed of two subunits.

Its subcellular location is the cytoplasm. The catalysed reaction is oxaloacetate + acetyl-CoA + ADP + phosphate = citrate + ATP + CoA. In terms of biological role, catalyzes the formation of cytosolic acetyl-CoA, which is mainly used for the biosynthesis of fatty acids and sterols. This chain is Probable ATP-citrate synthase subunit 1, found in Schizosaccharomyces pombe (strain 972 / ATCC 24843) (Fission yeast).